A 520-amino-acid chain; its full sequence is 2-isopropylmalate synthase (520 aa).

The region spanning 5-267 (VIIFDTTLRD…HTNINHQEIY (263 aa)) is the Pyruvate carboxyltransferase domain. Mn(2+)-binding residues include aspartate 14, histidine 202, histidine 204, and asparagine 238. A regulatory domain region spans residues 392 to 520 (RLDYFSVQSG…RLQQNNQEMV (129 aa)).

This sequence belongs to the alpha-IPM synthase/homocitrate synthase family. LeuA type 1 subfamily. In terms of assembly, homodimer. It depends on Mn(2+) as a cofactor.

The protein resides in the cytoplasm. It catalyses the reaction 3-methyl-2-oxobutanoate + acetyl-CoA + H2O = (2S)-2-isopropylmalate + CoA + H(+). Its pathway is amino-acid biosynthesis; L-leucine biosynthesis; L-leucine from 3-methyl-2-oxobutanoate: step 1/4. Catalyzes the condensation of the acetyl group of acetyl-CoA with 3-methyl-2-oxobutanoate (2-ketoisovalerate) to form 3-carboxy-3-hydroxy-4-methylpentanoate (2-isopropylmalate). This Yersinia enterocolitica serotype O:8 / biotype 1B (strain NCTC 13174 / 8081) protein is 2-isopropylmalate synthase.